Consider the following 627-residue polypeptide: MAKTEQRFDYVKIGLASPERIIEWGQRTLPNGQVVGEVTKPETINYRTLKPEMDGLFCERIFGPVKDWECHCGKYKRVRHRGIVCERCGVEVTESRVRRHRMGYIKLAAPVTHVWYLKGIPSHIATLLDMPLRDVEQVVYFNAYVVVDPGNAPNLSYKQLLTEDQYLEIEDQMYEEGSELQLPENWAMIGAEAIERLLKDIDLEKEAEQLREEIASARGQKRARLIKRLRVIDNFIATGARPEWMVLRVLPVIPPDLRPMVQLDGGRFATSDLNDLYRRVINRNNRLARLQEIMAPEIIVRNEKRMLQEAVDALIDNGRRGRMVVGANNRPLKSLSDIIEGKQGRFRQNLLGKRVDYSGRSVIVVGPNLRMHQCGLPKEMAIELFQPFVIHKLIKRGIVNNIKAAKKLIQSNDPQVWDVLEDVIDGHPVLLNRAPTLHRLGIQAFEPILVEGRAIQLHPLVCPAFNADFDGDQMAVHVPLSLEAQAEARLLMLATNNILSPATGAPIITPSQDMVLGCYYLTADNPHAPDLGDRYFASLEDALIAYDRGVIGLHSKIWVRYSGPMELGKEEKESEPQIIEEPGGTRLKITNYRRIREDRDGNVISQYIRTTAGRIIFNKTVQDILSA.

Zn(2+)-binding residues include C70, C72, C85, and C88. Mg(2+) contacts are provided by D468, D470, and D472.

This sequence belongs to the RNA polymerase beta' chain family. RpoC1 subfamily. In terms of assembly, in cyanobacteria the RNAP catalytic core is composed of 2 alpha, 1 beta, 1 beta', 1 gamma and 1 omega subunit. When a sigma factor is associated with the core the holoenzyme is formed, which can initiate transcription. Mg(2+) serves as cofactor. The cofactor is Zn(2+).

It carries out the reaction RNA(n) + a ribonucleoside 5'-triphosphate = RNA(n+1) + diphosphate. Functionally, DNA-dependent RNA polymerase catalyzes the transcription of DNA into RNA using the four ribonucleoside triphosphates as substrates. This is DNA-directed RNA polymerase subunit gamma from Synechococcus sp. (strain JA-3-3Ab) (Cyanobacteria bacterium Yellowstone A-Prime).